We begin with the raw amino-acid sequence, 293 residues long: Alcohol dehydrogenase 1 (293 aa).

Residues Cys26, Cys29, Cys32, Cys40, and Cys104 each coordinate Zn(2+). NAD(+)-binding positions include 129–134 (GLGAVG), Asp153, Arg158, Thr199, Val222, 222–224 (VGV), and Phe249.

Belongs to the zinc-containing alcohol dehydrogenase family. As to quaternary structure, homodimer. It depends on Zn(2+) as a cofactor.

It localises to the cytoplasm. The enzyme catalyses a primary alcohol + NAD(+) = an aldehyde + NADH + H(+). It carries out the reaction a secondary alcohol + NAD(+) = a ketone + NADH + H(+). The polypeptide is Alcohol dehydrogenase 1 (ADH1) (Zea luxurians (Guatemalan teosinte)).